The following is a 209-amino-acid chain: Ion-translocating oxidoreductase complex subunit G (209 aa).

Residues 9–29 form a helical membrane-spanning segment; it reads GLVLAIFACASTGLVAVTHYL. T175 is modified (FMN phosphoryl threonine).

Belongs to the RnfG family. The complex is composed of six subunits: RnfA, RnfB, RnfC, RnfD, RnfE and RnfG. FMN serves as cofactor.

The protein resides in the cell inner membrane. Part of a membrane-bound complex that couples electron transfer with translocation of ions across the membrane. This chain is Ion-translocating oxidoreductase complex subunit G, found in Vibrio atlanticus (strain LGP32) (Vibrio splendidus (strain Mel32)).